The sequence spans 197 residues: Xanthine phosphoribosyltransferase (197 aa).

Residues Leu20 and Thr27 each contribute to the xanthine site. Residue 128–132 participates in 5-phospho-alpha-D-ribose 1-diphosphate binding; the sequence is ANGQA. Residue Lys156 participates in xanthine binding.

It belongs to the purine/pyrimidine phosphoribosyltransferase family. Xpt subfamily. Homodimer.

The protein resides in the cytoplasm. It carries out the reaction XMP + diphosphate = xanthine + 5-phospho-alpha-D-ribose 1-diphosphate. Its pathway is purine metabolism; XMP biosynthesis via salvage pathway; XMP from xanthine: step 1/1. Its function is as follows. Converts the preformed base xanthine, a product of nucleic acid breakdown, to xanthosine 5'-monophosphate (XMP), so it can be reused for RNA or DNA synthesis. The protein is Xanthine phosphoribosyltransferase of Lactococcus lactis subsp. cremoris (strain SK11).